The sequence spans 138 residues: Small ribosomal subunit protein uS11c (138 aa).

The disordered stretch occupies residues 1-21 (MTKSIPRIGSRRGGRIASRKN). Basic residues predominate over residues 9-21 (GSRRGGRIASRKN).

It belongs to the universal ribosomal protein uS11 family. In terms of assembly, part of the 30S ribosomal subunit.

It is found in the plastid. The protein resides in the chloroplast. The polypeptide is Small ribosomal subunit protein uS11c (Calycanthus floridus var. glaucus (Eastern sweetshrub)).